The primary structure comprises 221 residues: Charged multivesicular body protein 3 (221 aa).

Glycine 2 is lipidated: N-myristoyl glycine. The stretch at 22–54 (KIRKEMRVIDRQIRDIQREEEKVKRSIKDAAKK) forms a coiled coil. Important for autoinhibitory function stretches follow at residues 59–64 (VCIILA) and 168–169 (IL). Residues 144–221 (LEDTLEGMDD…MQSRLAALRS (78 aa)) are a coiled coil. Residues 181-221 (PSKVTDLPDPVAIGATAAPEEESEEEEEIEEMQSRLAALRS) form a disordered region. The segment covering 199–211 (PEEESEEEEEIEE) has biased composition (acidic residues). The MIT-interacting motif motif lies at 200–210 (EEESEEEEEIE). Interaction with STAMBP stretches follow at residues 202–206 (ESEEE) and 220–221 (RS).

The protein belongs to the SNF7 family. As to quaternary structure, probable core component of the endosomal sorting required for transport complex III (ESCRT-III). ESCRT-III components are thought to multimerize to form a flat lattice on the perimeter membrane of the endosome. Several assembly forms of ESCRT-III may exist that interact and act sequentially.

It localises to the cytoplasm. Its subcellular location is the cytosol. The protein localises to the membrane. It is found in the endosome. The protein resides in the late endosome membrane. In terms of biological role, probable core component of the endosomal sorting required for transport complex III (ESCRT-III) which is involved in multivesicular bodies (MVBs) formation and sorting of endosomal cargo proteins into MVBs. MVBs contain intraluminal vesicles (ILVs) that are generated by invagination and scission from the limiting membrane of the endosome and mostly are delivered to lysosomes enabling degradation of membrane proteins, such as stimulated growth factor receptors, lysosomal enzymes and lipids. Involved in late stages of cytokinesis. Plays a role in endosomal sorting/trafficking of EGF receptor. In Danio rerio (Zebrafish), this protein is Charged multivesicular body protein 3 (chmp3).